Consider the following 986-residue polypeptide: Vacuolar membrane protease (986 aa).

Residues methionine 1–threonine 20 are Cytoplasmic-facing. Residues leucine 21–valine 41 traverse the membrane as a helical segment. Residues proline 42–leucine 392 lie on the Vacuolar side of the membrane. N-linked (GlcNAc...) asparagine glycans are attached at residues asparagine 53, asparagine 116, and asparagine 119. Zn(2+)-binding residues include histidine 175 and aspartate 187. Catalysis depends on glutamate 221, which acts as the Proton acceptor. A Zn(2+)-binding site is contributed by glutamate 222. Residue asparagine 238 is glycosylated (N-linked (GlcNAc...) asparagine). 2 residues coordinate Zn(2+): glutamate 247 and histidine 320. A helical membrane pass occupies residues phenylalanine 393 to valine 413. At leucine 414–threonine 447 the chain is on the cytoplasmic side. The chain crosses the membrane as a helical span at residues proline 448–valine 468. Residues asparagine 469 to glutamine 477 lie on the Vacuolar side of the membrane. A helical transmembrane segment spans residues phenylalanine 478 to alanine 498. At alanine 499–arginine 509 the chain is on the cytoplasmic side. A helical membrane pass occupies residues alanine 510–tyrosine 530. Residues alanine 531–lysine 534 lie on the Vacuolar side of the membrane. A helical membrane pass occupies residues glycine 535–valine 555. Residues serine 556 to tryptophan 665 lie on the Cytoplasmic side of the membrane. The tract at residues glutamate 595–serine 620 is disordered. Residues valine 666 to phenylalanine 686 form a helical membrane-spanning segment. Topologically, residues leucine 687–phenylalanine 702 are vacuolar. The helical transmembrane segment at isoleucine 703–isoleucine 723 threads the bilayer. Topologically, residues histidine 724–histidine 729 are cytoplasmic. Residues isoleucine 730–proline 750 traverse the membrane as a helical segment. At phenylalanine 751–glutamine 986 the chain is on the vacuolar side. 3 N-linked (GlcNAc...) asparagine glycosylation sites follow: asparagine 797, asparagine 840, and asparagine 948.

This sequence belongs to the peptidase M28 family. Zn(2+) serves as cofactor.

It localises to the vacuole membrane. Its function is as follows. May be involved in vacuolar sorting and osmoregulation. This Blastomyces gilchristii (strain SLH14081) (Blastomyces dermatitidis) protein is Vacuolar membrane protease.